Reading from the N-terminus, the 1034-residue chain is Platelet endothelial aggregation receptor 1 (1034 aa).

Positions 1–18 (MPLCPLLLLALGLRLTGT) are cleaved as a signal peptide. The Extracellular portion of the chain corresponds to 19–754 (LNSNDPNVCT…PTSPVTHNSL (736 aa)). Positions 23 to 101 (DPNVCTFWES…YYESRGACVP (79 aa)) constitute an EMI domain. Cystine bridges form between Cys27–Cys89, Cys53–Cys63, and Cys88–Cys99. N-linked (GlcNAc...) asparagine glycosylation is present at Asn150. EGF-like domains are found at residues 181–215 (YGPA…PSCN), 223–258 (DGFF…VICS), 266–301 (HGPN…DRCQ), 309–344 (FGQD…DRCT), and 398–433 (HGPG…PHCA). 5 cysteine pairs are disulfide-bonded: Cys185-Cys196, Cys189-Cys203, Cys205-Cys214, Cys233-Cys246, and Cys248-Cys257. The N-linked (GlcNAc...) asparagine glycan is linked to Asn269. Cystine bridges form between Cys270-Cys282, Cys276-Cys289, Cys291-Cys300, Cys313-Cys325, Cys319-Cys332, Cys334-Cys343, Cys402-Cys414, Cys408-Cys421, and Cys423-Cys432. A glycan (N-linked (GlcNAc...) asparagine) is linked at Asn474. EGF-like domains are found at residues 484–519 (WGFN…AHCQ), 575–605 (SNTC…PSCQ), 613–648 (YGKR…PDCS), and 656–691 (WGLK…PNCL). Disulfide bonds link Cys488–Cys500, Cys494–Cys507, Cys509–Cys518, Cys578–Cys586, Cys580–Cys593, Cys595–Cys604, Cys617–Cys629, Cys622–Cys636, Cys638–Cys647, Cys660–Cys672, Cys666–Cys679, and Cys681–Cys690. Residues 755 to 775 (GAVIGIAVLGTLVVALIALFI) form a helical membrane-spanning segment. The Cytoplasmic portion of the chain corresponds to 776 to 1034 (GYRQWQKGKE…PSPPSRRQDR (259 aa)). The disordered stretch occupies residues 823–883 (TLSQCSPNPP…PHERGASHLD (61 aa)). Residues 851–883 (RPSRAHGRENHVTLPADWKHRREPHERGASHLD) are compositionally biased toward basic and acidic residues. Tyr923 carries the post-translational modification Phosphotyrosine. Residues 925 to 1034 (TIRDLPSLPG…PSPPSRRQDR (110 aa)) form a disordered region. At Ser951 the chain carries Phosphoserine. A compositionally biased stretch (polar residues) spans 972–991 (DSGTYEQPSPLSHNEESLGS). Ser1026 is subject to Phosphoserine.

The protein belongs to the MEGF family. Interacts with SHC2 upon its aggregation-induced tyrosine phosphorylation. Interacts (via extracellular domain) with SVEP1. Phosphorylated in the intracellular domain on tyrosine residues. Phosphorylated on tyrosine residues by SRC. Tyrosine phosphorylation is detected upon platelet aggregation stimulated by collagen, TRAP and thrombin and platelet-platelet contacts but not after platelet activation. Tyrosine phosphorylation enhanced its association with SHC1 and SHC2. Phosphorylated in the intracellular domain on tyrosine residues. Phosphorylated when in the presence of SVEP1. As to expression, expressed in thymocytes, bone marrow stromal and osteogenic cells (at protein level). Strongly expressed in kidney and heart. Moderately expressed in lung, spleen, thymus, liver, brain, testis, skin and stomach. Expressed in hematopoietic stem progenitor cells.

It is found in the cell membrane. Its subcellular location is the cell projection. The protein localises to the lamellipodium. In terms of biological role, required for SVEP1-mediated platelet activation, via its interaction with SVEP1 and subsequent activation of AKT/mTOR signaling. May be involved in the early stages of hematopoiesis. The polypeptide is Platelet endothelial aggregation receptor 1 (Pear1) (Mus musculus (Mouse)).